Consider the following 35-residue polypeptide: Photosystem II reaction center protein T (35 aa).

The chain crosses the membrane as a helical span at residues 3–23 (ALVYTFLLVSTLGIIFFAIFF).

The protein belongs to the PsbT family. As to quaternary structure, PSII is composed of 1 copy each of membrane proteins PsbA, PsbB, PsbC, PsbD, PsbE, PsbF, PsbH, PsbI, PsbJ, PsbK, PsbL, PsbM, PsbT, PsbY, PsbZ, Psb30/Ycf12, at least 3 peripheral proteins of the oxygen-evolving complex and a large number of cofactors. It forms dimeric complexes.

It localises to the plastid. The protein localises to the chloroplast thylakoid membrane. In terms of biological role, found at the monomer-monomer interface of the photosystem II (PS II) dimer, plays a role in assembly and dimerization of PSII. PSII is a light-driven water plastoquinone oxidoreductase, using light energy to abstract electrons from H(2)O, generating a proton gradient subsequently used for ATP formation. The polypeptide is Photosystem II reaction center protein T (Taxus brevifolia (Pacific yew)).